The primary structure comprises 288 residues: NAD kinase (288 aa).

D68 functions as the Proton acceptor in the catalytic mechanism. Residues 68–69, 142–143, R153, D172, and Q242 contribute to the NAD(+) site; these read DG and ND.

Belongs to the NAD kinase family. It depends on a divalent metal cation as a cofactor.

It is found in the cytoplasm. It carries out the reaction NAD(+) + ATP = ADP + NADP(+) + H(+). Its function is as follows. Involved in the regulation of the intracellular balance of NAD and NADP, and is a key enzyme in the biosynthesis of NADP. Catalyzes specifically the phosphorylation on 2'-hydroxyl of the adenosine moiety of NAD to yield NADP. This chain is NAD kinase, found in Desulforamulus reducens (strain ATCC BAA-1160 / DSM 100696 / MI-1) (Desulfotomaculum reducens).